Reading from the N-terminus, the 78-residue chain is MTNKGQLLQDPFLNALRKEHVPVSIYLVNGIKLQGHIESFDQYVVLLRNTVTQMVYKHAISTVVPARAVNLSLESEAE.

One can recognise a Sm domain in the interval 10–69 (DPFLNALRKEHVPVSIYLVNGIKLQGHIESFDQYVVLLRNTVTQMVYKHAISTVVPARAV).

It belongs to the Hfq family. Homohexamer.

Its function is as follows. RNA chaperone that binds small regulatory RNA (sRNAs) and mRNAs to facilitate mRNA translational regulation in response to envelope stress, environmental stress and changes in metabolite concentrations. Also binds with high specificity to tRNAs. This chain is RNA-binding protein Hfq, found in Janthinobacterium sp. (strain Marseille) (Minibacterium massiliensis).